We begin with the raw amino-acid sequence, 204 residues long: GATA transcription factor 14 (204 aa).

Over residues 57–66 the composition is skewed to basic and acidic residues; the sequence is REFDTNDSKP. The interval 57 to 102 is disordered; it reads REFDTNDSKPSRNFSNLPTATRGRLHAPKRSGNKRGRQKRLSFKSP. Residues 79-98 are compositionally biased toward basic residues; sequence GRLHAPKRSGNKRGRQKRLS. Residues 111–165 form a GATA-type zinc finger; it reads GITDKSCSHCGTRKTPLWREGPRGAGTLCNACGMRYRTGRLLPEYRPASSPDFKP. The disordered stretch occupies residues 180 to 204; it reads RERKSSPPNSFGFSESYHSTRKLGF. Residues 185–196 are compositionally biased toward polar residues; it reads SPPNSFGFSESY.

Belongs to the type IV zinc-finger family. Class A subfamily.

The protein localises to the nucleus. Functionally, transcriptional activator that specifically binds 5'-GATA-3' or 5'-GAT-3' motifs within gene promoters. May be involved in the regulation of some light-responsive genes. This is GATA transcription factor 14 (GATA14) from Arabidopsis thaliana (Mouse-ear cress).